Reading from the N-terminus, the 359-residue chain is DNA-directed RNA polymerase RPB3-11 homolog (359 aa).

It in the N-terminal section; belongs to the archaeal RpoD/eukaryotic RPB3 RNA polymerase subunit family. The protein in the C-terminal section; belongs to the archaeal RpoL/eukaryotic RPB11/RPC19 RNA polymerase subunit family. As to quaternary structure, part of the viral DNA-directed RNA polymerase that consists of 8 polII-like subunits (RPB1, RPB2, RPB3, RPB5, RPB6, RPB7, RPB9, RPB10), a capping enzyme and a termination factor.

It localises to the host cytoplasm. It is found in the virion. In terms of biological role, component of the DNA-directed RNA polymerase (RNAP) that catalyzes the transcription in the cytoplasm of viral DNA into RNA using the four ribonucleoside triphosphates as substrates. This is DNA-directed RNA polymerase RPB3-11 homolog from Ornithodoros (relapsing fever ticks).